Reading from the N-terminus, the 449-residue chain is MLETPKVLLKNLQDCKIHFIGIGGIGISGLAKYLKAQGAKISGSDIAISPSVKYLKALGVEINIPHDPKAINHQDVIIHSAIIKEDNTEIQRAKELEIPILSRKDALYSILKDKRVFSVCGAHGKSSITAMLSAICPAFGAIIGAHSKEFDSNVRESADMSLVFEADESDSSFLFSNPFCAIVPNTEPEHLEHYDHDLERFFFAYKYFLDHAQKRVIYKEDPFLKNYSKDAIVLEKKDIYNIQYILKDGEPYTSFELKNLGAFLVWGLGEHNATNASLAILSALDELNLEEIRNNLLNFKGIKKRFDILQKNNLILIDDYAHHPTEIGATLKSARIYANLLNTQEKIIVIWQAHKYSRLMDNLEEFKKCFLEHCDRLIILPVYSASEVKRDIDLKAHFKHYNPTFIDRVRKKGDFLELLVNDNVVETIEKGFVIGFGAGDITYQLRGEM.

ATP is bound at residue 121 to 127 (GAHGKSS).

It belongs to the MurCDEF family.

The protein resides in the cytoplasm. The catalysed reaction is UDP-N-acetyl-alpha-D-muramate + L-alanine + ATP = UDP-N-acetyl-alpha-D-muramoyl-L-alanine + ADP + phosphate + H(+). It functions in the pathway cell wall biogenesis; peptidoglycan biosynthesis. Its function is as follows. Cell wall formation. The protein is UDP-N-acetylmuramate--L-alanine ligase of Helicobacter pylori (strain J99 / ATCC 700824) (Campylobacter pylori J99).